The chain runs to 818 residues: Phenylalanine--tRNA ligase beta subunit (818 aa).

One can recognise a tRNA-binding domain in the interval 39–148; it reads AAELQKFEVA…EDAVVGENFT (110 aa). One can recognise a B5 domain in the interval 423–498; the sequence is PQKKPLDFSA…RIYGYDKIES (76 aa). Mg(2+) contacts are provided by Asp476, Asp482, Glu485, and Glu486. The 94-residue stretch at 724–817 folds into the FDX-ACB domain; sequence SDFQANFRDY…IEQKFQGTLR (94 aa).

This sequence belongs to the phenylalanyl-tRNA synthetase beta subunit family. Type 1 subfamily. Tetramer of two alpha and two beta subunits. It depends on Mg(2+) as a cofactor.

Its subcellular location is the cytoplasm. The catalysed reaction is tRNA(Phe) + L-phenylalanine + ATP = L-phenylalanyl-tRNA(Phe) + AMP + diphosphate + H(+). In Rickettsia felis (strain ATCC VR-1525 / URRWXCal2) (Rickettsia azadi), this protein is Phenylalanine--tRNA ligase beta subunit.